The chain runs to 259 residues: MTAVHSLPADVQAQVSAAEWQTRVDLAACYRLVALHGWDDLIFTHISAKVPGTEDFLINPFGLMFHEITASSLVKVDASGKKLMDSPYEINPAGYTIHSAVHEVRHDVECVLHTHTAAGIAVSCQKQGLLPLSQQSLFVLSSLSYHAYEGVALNHEEKARLQADLGASNFLILPNHGLLTCGGSIADTFLMMFTLQRACEVQVMAQSGGAELIHIPGQILAGARDMIAGVMRSKTGMGGQLAWPALLRKLDQQNPGYRQ.

Positions 113, 115, and 176 each coordinate Zn(2+).

Belongs to the aldolase class II family. It depends on Zn(2+) as a cofactor.

The polypeptide is Putative aldolase class 2 protein PA3430 (Pseudomonas aeruginosa (strain ATCC 15692 / DSM 22644 / CIP 104116 / JCM 14847 / LMG 12228 / 1C / PRS 101 / PAO1)).